Here is a 561-residue protein sequence, read N- to C-terminus: FAD-binding monooxygenase tazF (561 aa).

Residues 74 to 77 (TWLD), 86 to 87 (DI), and tyrosine 92 contribute to the FAD site. 84–86 (GCD) contacts NADP(+). NADP(+) contacts are provided by residues 212 to 218 (NGSSALQ) and 235 to 236 (RH).

It belongs to the FAD-binding monooxygenase family. FAD is required as a cofactor.

It participates in secondary metabolite biosynthesis. In terms of biological role, FAD-binding monooxygenase; part of the gene cluster that mediates the biosynthesis of azaterrilone A and other azaphilones, a class of fungal metabolites characterized by a highly oxygenated pyrano-quinone bicyclic core and exhibiting a broad range of bioactivities. The first step of the pathway begins with the non-reducing polyketide synthase tazA that assembles one acetyl-CoA starter unit, five malonyl-CoA units, and catalyzes a series of Claisen condensations, methylation, PT-mediated cyclization, and finally releases the first hexaketide precursor through the R-domain. The tazA product then undergoes reduction on its terminal ketone and the following pyran-ring formation by yet undetermined enzyme(s). Dehydration and enoyl reduction, possibly involving the trans-enoyl reductase tazE leads to the next intermediate. TazD is predicted as an acetyltransferase and might catalyze the acetylation steps leading to the synthesis of azaterrilone A. Azaterrilone A is not the final product of the taz pathway and both the highly reducing polyketide synthase tazB and the dual enzyme tazHJ catalyze late steps of the pathway, leading to the production of the 2 final stereoisomers that contain additional polyketide modification whose structures have still to be determined. This Aspergillus terreus (strain NIH 2624 / FGSC A1156) protein is FAD-binding monooxygenase tazF.